We begin with the raw amino-acid sequence, 432 residues long: Adenylosuccinate synthetase (432 aa).

Residues 13-19 and 41-43 each bind GTP; these read GDEGKGK and GHT. Asp-14 acts as the Proton acceptor in catalysis. Residues Asp-14 and Gly-41 each coordinate Mg(2+). IMP is bound by residues 14–17, 39–42, Thr-130, Arg-144, Gln-225, Thr-240, and Arg-304; these read DEGK and NAGH. His-42 functions as the Proton donor in the catalytic mechanism. 300–306 contacts substrate; that stretch reads ATTGRRR. GTP-binding positions include Arg-306, 332–334, and 415–417; these read KLD and STG.

Belongs to the adenylosuccinate synthetase family. As to quaternary structure, homodimer. The cofactor is Mg(2+).

It localises to the cytoplasm. It catalyses the reaction IMP + L-aspartate + GTP = N(6)-(1,2-dicarboxyethyl)-AMP + GDP + phosphate + 2 H(+). It functions in the pathway purine metabolism; AMP biosynthesis via de novo pathway; AMP from IMP: step 1/2. Plays an important role in the de novo pathway of purine nucleotide biosynthesis. Catalyzes the first committed step in the biosynthesis of AMP from IMP. This is Adenylosuccinate synthetase from Baumannia cicadellinicola subsp. Homalodisca coagulata.